The following is a 219-amino-acid chain: Probable nicotinate-nucleotide adenylyltransferase (219 aa).

It belongs to the NadD family.

It catalyses the reaction nicotinate beta-D-ribonucleotide + ATP + H(+) = deamido-NAD(+) + diphosphate. It functions in the pathway cofactor biosynthesis; NAD(+) biosynthesis; deamido-NAD(+) from nicotinate D-ribonucleotide: step 1/1. In terms of biological role, catalyzes the reversible adenylation of nicotinate mononucleotide (NaMN) to nicotinic acid adenine dinucleotide (NaAD). This chain is Probable nicotinate-nucleotide adenylyltransferase, found in Chromohalobacter salexigens (strain ATCC BAA-138 / DSM 3043 / CIP 106854 / NCIMB 13768 / 1H11).